The primary structure comprises 285 residues: Nucleotide-binding protein Glov_2163 (285 aa).

An ATP-binding site is contributed by 8 to 15; sequence GMSGSGKS. 59 to 62 serves as a coordination point for GTP; the sequence is DIRG.

It belongs to the RapZ-like family.

In terms of biological role, displays ATPase and GTPase activities. This Trichlorobacter lovleyi (strain ATCC BAA-1151 / DSM 17278 / SZ) (Geobacter lovleyi) protein is Nucleotide-binding protein Glov_2163.